Reading from the N-terminus, the 812-residue chain is Probable inorganic carbon transporter subunit DabA (812 aa).

The Zn(2+) site is built by Cys339, Asp341, His501, and Cys516.

This sequence belongs to the inorganic carbon transporter (TC 9.A.2) DabA family. As to quaternary structure, forms a complex with DabB. Requires Zn(2+) as cofactor.

It is found in the cell inner membrane. Functionally, part of an energy-coupled inorganic carbon pump. This Xanthomonas axonopodis pv. citri (strain 306) protein is Probable inorganic carbon transporter subunit DabA.